The following is a 186-amino-acid chain: Holliday junction branch migration complex subunit RuvA (186 aa).

The segment at 1–63 is domain I; that stretch reads MNDYINGFLY…DNHFKYYGFF (63 aa). Residues 64-137 are domain II; that stretch reads NQLVRDLFEI…QKELFNNKIS (74 aa). A region of interest (flexible linker) is located at residue S137. The segment at 137 to 186 is domain III; that stretch reads SEKKNKVITSLEKLGYKTKDIYKIIINVDEDLTIDELTKYVLEKLSYINN.

Belongs to the RuvA family. As to quaternary structure, homotetramer. Forms an RuvA(8)-RuvB(12)-Holliday junction (HJ) complex. HJ DNA is sandwiched between 2 RuvA tetramers; dsDNA enters through RuvA and exits via RuvB. An RuvB hexamer assembles on each DNA strand where it exits the tetramer. Each RuvB hexamer is contacted by two RuvA subunits (via domain III) on 2 adjacent RuvB subunits; this complex drives branch migration. In the full resolvosome a probable DNA-RuvA(4)-RuvB(12)-RuvC(2) complex forms which resolves the HJ.

The protein resides in the cytoplasm. In terms of biological role, the RuvA-RuvB-RuvC complex processes Holliday junction (HJ) DNA during genetic recombination and DNA repair, while the RuvA-RuvB complex plays an important role in the rescue of blocked DNA replication forks via replication fork reversal (RFR). RuvA specifically binds to HJ cruciform DNA, conferring on it an open structure. The RuvB hexamer acts as an ATP-dependent pump, pulling dsDNA into and through the RuvAB complex. HJ branch migration allows RuvC to scan DNA until it finds its consensus sequence, where it cleaves and resolves the cruciform DNA. The chain is Holliday junction branch migration complex subunit RuvA from Mycoplasma capricolum subsp. capricolum (strain California kid / ATCC 27343 / NCTC 10154).